Reading from the N-terminus, the 387-residue chain is Protochlorophyllide reductase A, chloroplastic (387 aa).

The transit peptide at 1-35 directs the protein to the chloroplast; it reads MALQVQAALLPSALSVPKKGNLSAVVKEPGFLSVS.

The protein belongs to the short-chain dehydrogenases/reductases (SDR) family. POR subfamily.

The protein resides in the plastid. The protein localises to the chloroplast. The catalysed reaction is chlorophyllide a + NADP(+) = protochlorophyllide a + NADPH + H(+). It functions in the pathway porphyrin-containing compound metabolism; chlorophyll biosynthesis. Its function is as follows. Phototransformation of protochlorophyllide (Pchlide) to chlorophyllide (Chlide). This is Protochlorophyllide reductase A, chloroplastic (PORA) from Oryza sativa subsp. japonica (Rice).